We begin with the raw amino-acid sequence, 534 residues long: O-phosphoserine--tRNA(Cys) ligase (534 aa).

Substrate is bound by residues 186–188, 231–233, 273–274, and Asn325; these read HMT, SAS, and YY.

Belongs to the class-II aminoacyl-tRNA synthetase family. O-phosphoseryl-tRNA(Cys) synthetase subfamily. As to quaternary structure, homotetramer. Interacts with SepCysS.

The enzyme catalyses tRNA(Cys) + O-phospho-L-serine + ATP = O-phospho-L-seryl-tRNA(Cys) + AMP + diphosphate. Its function is as follows. Catalyzes the attachment of O-phosphoserine (Sep) to tRNA(Cys). This chain is O-phosphoserine--tRNA(Cys) ligase (sepS), found in Archaeoglobus fulgidus (strain ATCC 49558 / DSM 4304 / JCM 9628 / NBRC 100126 / VC-16).